The primary structure comprises 248 residues: Metallo-beta-lactamase type 2 (248 aa).

An N-terminal signal peptide occupies residues 1 to 21 (MKRLKGLLVLALGFTGLQVFG). 5 residues coordinate Zn(2+): histidine 97, histidine 99, aspartate 101, histidine 160, and cysteine 179. Lysine 182 is a substrate binding site. Histidine 221 provides a ligand contact to Zn(2+).

This sequence belongs to the metallo-beta-lactamase superfamily. Class-B beta-lactamase family. In terms of assembly, monomer. The cofactor is Zn(2+).

Its subcellular location is the periplasm. The enzyme catalyses a beta-lactam + H2O = a substituted beta-amino acid. Confers resistance to the different beta-lactams antibiotics (penicillin, cephalosporin and carbapenem) via the hydrolysis of the beta-lactam ring. The polypeptide is Metallo-beta-lactamase type 2 (blaB6) (Elizabethkingia meningoseptica (Chryseobacterium meningosepticum)).